Here is a 209-residue protein sequence, read N- to C-terminus: MTTKKRTASSTRWMQEHFDDHYVKLAQKRGLRSRAAFKLEEIQEKDHLIKQGMTVVDLGAAPGGWSQVAAKLTGDKGKVIACDILPMDPIVGVDFLQGDFREDKVLQALLERVGQDKVDVVLSDMAPNMSGSGAVDQPRAMYLVELALDMCHQVLTPNGCFAVKVFQGEGFDDYIKTVKQAFKVVKTRKPDSSRARSREVYLVATGYKL.

S-adenosyl-L-methionine is bound by residues Gly-63, Trp-65, Asp-83, Asp-99, and Asp-124. Lys-164 acts as the Proton acceptor in catalysis.

Belongs to the class I-like SAM-binding methyltransferase superfamily. RNA methyltransferase RlmE family.

Its subcellular location is the cytoplasm. The catalysed reaction is uridine(2552) in 23S rRNA + S-adenosyl-L-methionine = 2'-O-methyluridine(2552) in 23S rRNA + S-adenosyl-L-homocysteine + H(+). Specifically methylates the uridine in position 2552 of 23S rRNA at the 2'-O position of the ribose in the fully assembled 50S ribosomal subunit. The chain is Ribosomal RNA large subunit methyltransferase E from Shewanella frigidimarina (strain NCIMB 400).